A 149-amino-acid chain; its full sequence is MKVIFLKDVKGKGKKGEVKNVADGYAHNFLIKQGLAVEANPTNLSALEGQKNKEKKNAVQELEQAKQLKETLEALTVELTAKSGEGGRLFGSITSKQIADKLQKDHQIKVDKRKIELNDAIRALGYTNVPVKLHPEVQATLKVHVTEQA.

This sequence belongs to the bacterial ribosomal protein bL9 family.

Its function is as follows. Binds to the 23S rRNA. The polypeptide is Large ribosomal subunit protein bL9 (Bacillus pumilus (strain SAFR-032)).